Reading from the N-terminus, the 625-residue chain is Cytochrome c oxidase subunit 1 (625 aa).

A helical membrane pass occupies residues 23 to 43 (IAIMYLIAGTLFFVKAGVMAL). Position 69 (H69) interacts with Fe(II)-heme a. 6 helical membrane-spanning segments follow: residues 72 to 92 (IMLF…VIPL), 99 to 119 (VAFP…GLLL), 151 to 171 (FYVL…INFL), 195 to 215 (FISS…LALL), 240 to 260 (IFWI…FGII), and 272 to 292 (LFGY…GFMV). The Cu cation site is built by H246 and Y250. The 1'-histidyl-3'-tyrosine (His-Tyr) cross-link spans 246–250 (HPEVY). Residues H295 and H296 each contribute to the Cu cation site. The next 2 helical transmembrane spans lie at 309-329 (IFAV…FNWL) and 343-363 (MLFA…GVML). H381 lines the heme a3 pocket. Transmembrane regions (helical) follow at residues 382 to 402 (FHYI…FYWY), 417 to 437 (LFFW…HLLG), 460 to 480 (ISTI…INVI), 551 to 571 (SILP…LIML), and 577 to 597 (IINP…CMFV). Fe(II)-heme a is bound at residue H383.

This sequence belongs to the heme-copper respiratory oxidase family.

It localises to the cell membrane. It carries out the reaction 4 Fe(II)-[cytochrome c] + O2 + 8 H(+)(in) = 4 Fe(III)-[cytochrome c] + 2 H2O + 4 H(+)(out). Its pathway is energy metabolism; oxidative phosphorylation. In terms of biological role, cytochrome c oxidase is the component of the respiratory chain that catalyzes the reduction of oxygen to water. Subunits 1-3 form the functional core of the enzyme complex. CO I is the catalytic subunit of the enzyme. Electrons originating in cytochrome c are transferred via the copper A center of subunit 2 and heme A of subunit 1 to the bimetallic center formed by heme A3 and copper B. This chain is Cytochrome c oxidase subunit 1 (ctaD), found in Alkalihalophilus pseudofirmus (strain ATCC BAA-2126 / JCM 17055 / OF4) (Bacillus pseudofirmus).